We begin with the raw amino-acid sequence, 459 residues long: Paired box protein Pax-8 (459 aa).

The segment at residues 9–135 is a DNA-binding region (paired); the sequence is GHGGLNQLGG…SSINRIIRTK (127 aa). Residues 12 to 68 are PAI subdomain; it reads GLNQLGGAFVNGRPLPEVVRQRIVDLAHQGVRPCDISRQLRVSHGCVSKILGRYYET. An RED subdomain region spans residues 87–135; it reads KVVEKIGDYKRQNPTMFAWEIRDRLLAEGVCDNDTVPSVSSINRIIRTK. The span at 159–182 shows a compositional bias: polar residues; it reads LIPSSAVTPPESPQSDSLGSTYSI. Residues 159-223 are disordered; the sequence is LIPSSAVTPP…QSSSSGPRKH (65 aa). S305 carries the post-translational modification Phosphoserine.

As to quaternary structure, interacts with WWTR1.

The protein localises to the nucleus. Functionally, thought to encode a transcription factor. It may have a role in kidney cell differentiation. May play a regulatory role in mammalian development. The chain is Paired box protein Pax-8 (PAX8) from Canis lupus familiaris (Dog).